The following is a 222-amino-acid chain: UPF0758 protein YicR (222 aa).

Residues P100–I222 form the MPN domain. The Zn(2+) site is built by H171, H173, and D184. Residues H171 to D184 carry the JAMM motif motif.

It belongs to the UPF0758 family. YicR subfamily.

This is UPF0758 protein YicR from Escherichia coli (strain 55989 / EAEC).